The chain runs to 166 residues: Ferric nitrobindin-like protein (166 aa).

A GXWXGXG motif is present at residues 21–27; it reads GHWEGEG.

The protein belongs to the nitrobindin family.

This Cutibacterium acnes (strain DSM 16379 / KPA171202) (Propionibacterium acnes) protein is Ferric nitrobindin-like protein.